We begin with the raw amino-acid sequence, 388 residues long: Alanine racemase (388 aa).

Catalysis depends on lysine 40, which acts as the Proton acceptor; specific for D-alanine. Lysine 40 is subject to N6-(pyridoxal phosphate)lysine. Position 137 (arginine 137) interacts with substrate. The Proton acceptor; specific for L-alanine role is filled by tyrosine 269. Methionine 318 lines the substrate pocket.

It belongs to the alanine racemase family. Pyridoxal 5'-phosphate is required as a cofactor.

It catalyses the reaction L-alanine = D-alanine. Its pathway is amino-acid biosynthesis; D-alanine biosynthesis; D-alanine from L-alanine: step 1/1. In terms of biological role, catalyzes the interconversion of L-alanine and D-alanine. May also act on other amino acids. This Halalkalibacterium halodurans (strain ATCC BAA-125 / DSM 18197 / FERM 7344 / JCM 9153 / C-125) (Bacillus halodurans) protein is Alanine racemase (alr).